The sequence spans 288 residues: Putative alkaline ceramidase dcd3A (288 aa).

Residue N23 is glycosylated (N-linked (GlcNAc...) asparagine). Helical transmembrane passes span I41–V61, V78–T98, L105–V125, H146–I166, I172–I192, S206–E226, and L240–I260.

It belongs to the alkaline ceramidase family.

The protein resides in the membrane. The chain is Putative alkaline ceramidase dcd3A (dcd3A) from Dictyostelium discoideum (Social amoeba).